The following is an 867-amino-acid chain: Rifampicin phosphotransferase (867 aa).

Positions 1-314 (MKPYVLKFQE…FYIVQSRPIT (314 aa)) are ATP-binding. ATP contacts are provided by Lys-22, Arg-117, Gly-132, Thr-136, Gln-183, Glu-297, Gln-309, and Arg-311. A rifampicin-binding region spans residues 327–754 (NRVYISVAHQ…TSDGEMINGE (428 aa)). The rifampicin site is built by Gln-336 and Tyr-351. The segment at 767-865 (GLPVSSGTVE…INGTEGYIEI (99 aa)) is swivel phosphohistidine. His-825 acts as the Tele-phosphohistidine intermediate in catalysis.

The protein belongs to the rifampicin phosphotransferase family.

The catalysed reaction is rifampicin + ATP + H2O = 21-phosphorifampicin + AMP + phosphate + 2 H(+). Its function is as follows. Catalyzes the phosphorylation of rifampicin, also known as rifampin (RIF), leading to its inactivation. Confers high level resistance to a variety of clinically used rifamycin antibiotics. Does not show phosphoenolpyruvate (PEP) synthase activity. The sequence is that of Rifampicin phosphotransferase from Listeria monocytogenes serotype 4b (strain F2365).